We begin with the raw amino-acid sequence, 262 residues long: Putative hydro-lyase Mflv_5194 (262 aa).

The protein belongs to the D-glutamate cyclase family.

In Mycolicibacterium gilvum (strain PYR-GCK) (Mycobacterium gilvum (strain PYR-GCK)), this protein is Putative hydro-lyase Mflv_5194.